The primary structure comprises 180 residues: NAD(P)H-quinone oxidoreductase subunit I, chloroplastic (180 aa).

4Fe-4S ferredoxin-type domains follow at residues 55 to 84 (GRIH…VDWK) and 95 to 124 (LNYS…MTEE). Positions 64, 67, 70, 74, 104, 107, 110, and 114 each coordinate [4Fe-4S] cluster.

It belongs to the complex I 23 kDa subunit family. In terms of assembly, NDH is composed of at least 16 different subunits, 5 of which are encoded in the nucleus. [4Fe-4S] cluster is required as a cofactor.

It localises to the plastid. Its subcellular location is the chloroplast thylakoid membrane. The catalysed reaction is a plastoquinone + NADH + (n+1) H(+)(in) = a plastoquinol + NAD(+) + n H(+)(out). It catalyses the reaction a plastoquinone + NADPH + (n+1) H(+)(in) = a plastoquinol + NADP(+) + n H(+)(out). NDH shuttles electrons from NAD(P)H:plastoquinone, via FMN and iron-sulfur (Fe-S) centers, to quinones in the photosynthetic chain and possibly in a chloroplast respiratory chain. The immediate electron acceptor for the enzyme in this species is believed to be plastoquinone. Couples the redox reaction to proton translocation, and thus conserves the redox energy in a proton gradient. This is NAD(P)H-quinone oxidoreductase subunit I, chloroplastic from Sorghum bicolor (Sorghum).